The chain runs to 551 residues: MAEKRTVSPPAGTERRAKGWIQEAALRMLNNNLHPDVAERPDELIVYGGIGKAARNWECYEAIVDTLLRLENDETLLIQSGKPVAVFRTHPDAPRVLIANSNLVPAWATWDHFHELDKKGLIMYGQMTAGSWIYIGSQGIVQGTYETFAEVARQHFGGTLAGTITLTAGLGGMGGAQPLAVTMNGGVCLAIEVDPARIQRRIDTNYLDTMTDSLDAALEMAKQAKEEKKALSIGLVGNAAEVLPRLVEMGFVPDVLTDQTSAHDPLNGYIPAGLTLDEAAELRARDPKQYIARAKQSIAAHVRAMLAMQKQGAVTFDYGNNIRQVAKDEGVDDAFSFPGFVPAYIRPLFCEGKGPFRWVALSGDPEDIYKTDEVILREFSDNERLCHWIRMAQKRIKFQGLPARICWLGYGERAKFGKIINDMVAKGELKAPIVIGRDHLDSGSVASPNRETEGMKDGSDAIADWPILNALLNAVGGASWVSVHHGGGVGMGYSIHAGMVIVADGTKEAEKRLERVLTTDPGLGVVRHADAGYELAIRTAKEKGIDMPMLK.

NAD(+)-binding positions include 48-49 (GG), Q126, 172-174 (GMG), E192, R197, 238-239 (NA), 259-263 (QTSAH), 269-270 (YI), and Y318. C406 is a catalytic residue. G488 serves as a coordination point for NAD(+).

The protein belongs to the urocanase family. The cofactor is NAD(+).

It localises to the cytoplasm. It catalyses the reaction 4-imidazolone-5-propanoate = trans-urocanate + H2O. It participates in amino-acid degradation; L-histidine degradation into L-glutamate; N-formimidoyl-L-glutamate from L-histidine: step 2/3. In terms of biological role, catalyzes the conversion of urocanate to 4-imidazolone-5-propionate. The polypeptide is Urocanate hydratase (Geobacillus kaustophilus (strain HTA426)).